We begin with the raw amino-acid sequence, 983 residues long: Ephrin type-A receptor 3 (983 aa).

Positions 1 to 20 (MDCQLSILLLLSCSVLDSFG) are cleaved as a signal peptide. Residues 21-541 (ELIPQPSNEV…SFSISGESSQ (521 aa)) lie on the Extracellular side of the membrane. The Eph LBD domain occupies 29 to 207 (EVNLLDSKTI…YFKKCPFTVK (179 aa)). N232, N337, N391, N404, and N493 each carry an N-linked (GlcNAc...) asparagine glycan. 2 Fibronectin type-III domains span residues 325–435 (PPSS…TNQA) and 436–531 (APSP…TSPD). The chain crosses the membrane as a helical span at residues 542–565 (VVMIAISAAVAIILLTVVIYVLIG). At 566-983 (RFCGYKSKHG…TQSKNGPVPV (418 aa)) the chain is on the cytoplasmic side. Phosphotyrosine; by autocatalysis occurs at positions 596 and 602. Positions 621–882 (ISIDKVVGAG…QIVSILDKLI (262 aa)) constitute a Protein kinase domain. ATP-binding positions include 628 to 633 (GAGEFG), K653, and 700 to 706 (EYMENGS). Y701 is subject to Phosphotyrosine; by autocatalysis. D746 serves as the catalytic Proton acceptor. Residue 750–751 (RN) coordinates ATP. Y779 bears the Phosphotyrosine; by autocatalysis mark. The 65-residue stretch at 911-975 (TTFRTTGDWL…ISSIKALETQ (65 aa)) folds into the SAM domain. Y937 is modified (phosphotyrosine). Positions 981 to 983 (VPV) match the PDZ-binding motif.

This sequence belongs to the protein kinase superfamily. Tyr protein kinase family. Ephrin receptor subfamily. As to quaternary structure, heterotetramer upon binding of the ligand. The heterotetramer is composed of an ephrin dimer and a receptor dimer. Oligomerization is probably required to induce biological responses. Forms a ternary EFNA5-EPHA3-ADAM10 complex mediating EFNA5 extracellular domain shedding by ADAM10 which regulates the EFNA5-EPHA3 complex internalization and function. Interacts with NCK1 (via SH2 domain); mediates EFNA5-EPHA3 signaling. Interacts (phosphorylated) with PTPN1; dephosphorylates EPHA3 and may regulate its trafficking and function. Interacts (phosphorylated) with CRK; mediates EFNA5-EPHA3 signaling through RHOA GTPase activation. In terms of processing, autophosphorylates upon activation by EFNA5. Phosphorylation on Tyr-602 mediates interaction with NCK1. Dephosphorylated by PTPN1. Widely expressed. Highest level in placenta.

Its subcellular location is the cell membrane. The protein localises to the secreted. The catalysed reaction is L-tyrosyl-[protein] + ATP = O-phospho-L-tyrosyl-[protein] + ADP + H(+). Its function is as follows. Receptor tyrosine kinase which binds promiscuously membrane-bound ephrin family ligands residing on adjacent cells, leading to contact-dependent bidirectional signaling into neighboring cells. The signaling pathway downstream of the receptor is referred to as forward signaling while the signaling pathway downstream of the ephrin ligand is referred to as reverse signaling. Highly promiscuous for ephrin-A ligands it binds preferentially EFNA5. Upon activation by EFNA5 regulates cell-cell adhesion, cytoskeletal organization and cell migration. Plays a role in cardiac cells migration and differentiation and regulates the formation of the atrioventricular canal and septum during development probably through activation by EFNA1. Involved in the retinotectal mapping of neurons. May also control the segregation but not the guidance of motor and sensory axons during neuromuscular circuit development. The protein is Ephrin type-A receptor 3 (EPHA3) of Homo sapiens (Human).